The primary structure comprises 251 residues: Flap endonuclease Xni (251 aa).

Residue aspartate 104 participates in Mg(2+) binding. The region spanning 160–249 (VTPEQLADYW…LDGNLQQLRL (90 aa)) is the 5'-3' exonuclease domain. Residues leucine 171, alanine 172, proline 180, valine 182, and isoleucine 185 each coordinate K(+). Residues 184 to 189 (GIGPKS) form an interaction with DNA region.

Belongs to the Xni family. Mg(2+) is required as a cofactor. The cofactor is K(+).

Its function is as follows. Has flap endonuclease activity. During DNA replication, flap endonucleases cleave the 5'-overhanging flap structure that is generated by displacement synthesis when DNA polymerase encounters the 5'-end of a downstream Okazaki fragment. The polypeptide is Flap endonuclease Xni (Klebsiella pneumoniae subsp. pneumoniae (strain ATCC 700721 / MGH 78578)).